The sequence spans 196 residues: Imidazoleglycerol-phosphate dehydratase (196 aa).

The protein belongs to the imidazoleglycerol-phosphate dehydratase family.

Its subcellular location is the cytoplasm. The enzyme catalyses D-erythro-1-(imidazol-4-yl)glycerol 3-phosphate = 3-(imidazol-4-yl)-2-oxopropyl phosphate + H2O. It participates in amino-acid biosynthesis; L-histidine biosynthesis; L-histidine from 5-phospho-alpha-D-ribose 1-diphosphate: step 6/9. This Clostridium botulinum (strain Kyoto / Type A2) protein is Imidazoleglycerol-phosphate dehydratase.